The sequence spans 634 residues: SPARC-like protein 1 (634 aa).

The first 16 residues, 1-16 (MKAVLLLLYALGIAAA), serve as a signal peptide directing secretion. The tract at residues 50–335 (ADIEKHPNHK…DDSKHGASDD (286 aa)) is disordered. Over residues 51–62 (DIEKHPNHKAEK) the composition is skewed to basic and acidic residues. 3 positions are modified to phosphoserine: Ser-68, Ser-76, and Ser-84. A compositionally biased stretch (basic and acidic residues) spans 73 to 83 (HEQSTEQDKTY). The span at 89-99 (LKDEEDGDGDL) shows a compositional bias: acidic residues. Positions 131–144 (TVSTPFVDSDQPAN) are enriched in polar residues. Asn-144 is a glycosylation site (N-linked (GlcNAc...) asparagine). Phosphoserine is present on residues Ser-151 and Ser-159. 2 stretches are compositionally biased toward acidic residues: residues 189-198 (EKEEEEDPED) and 205-214 (NQEEEKEPPE). The segment covering 233–258 (QESSQPTQISKTKNDFEQGSQGQEGD) has biased composition (polar residues). Ser-259 bears the Phosphoserine mark. Basic and acidic residues-rich tracts occupy residues 263–276 (GEDK…HLPH) and 292–303 (GNRKDTDEEKAV). A phosphoserine mark is found at Ser-333 and Ser-340. The tract at residues 360 to 398 (EETPDESENRSEAGDNQGAKKAESSPNAEPSDEGNSRGH) is disordered. The segment covering 366 to 382 (SENRSEAGDNQGAKKAE) has biased composition (basic and acidic residues). The N-linked (GlcNAc...) asparagine glycan is linked to Asn-368. Residues Ser-370 and Ser-390 each carry the phosphoserine modification. Residues 402 to 424 (SCMNFQCKRGHTCKTDQHGKPHC) enclose the Follistatin-like domain. Intrachain disulfides connect Cys-403-Cys-414, Cys-408-Cys-424, Cys-426-Cys-460, Cys-432-Cys-453, Cys-442-Cys-479, Cys-485-Cys-596, and Cys-604-Cys-620. Positions 420–481 (GKPHCVCQDP…QLDYFGACKS (62 aa)) constitute a Kazal-like domain. Asn-446 carries an N-linked (GlcNAc...) asparagine glycan. The region spanning 592–627 (PMEHCITRFFEECDPNKDKHITLKEWGHCFGIKEED) is the EF-hand domain. Asp-605, Asn-607, Asp-609, His-611, and Glu-616 together coordinate Ca(2+).

The protein belongs to the SPARC family. As to expression, expressed in many types of neurons in the brain.

It localises to the secreted. Its subcellular location is the extracellular space. The protein resides in the extracellular matrix. This is SPARC-like protein 1 (Sparcl1) from Rattus norvegicus (Rat).